The primary structure comprises 136 residues: Large ribosomal subunit protein uL16c (136 aa).

Residues 1–17 are compositionally biased toward basic residues; the sequence is MLSPKRVKFRKQHRGRM. Residues 1–25 are disordered; sequence MLSPKRVKFRKQHRGRMKGISTRGN.

Belongs to the universal ribosomal protein uL16 family. As to quaternary structure, part of the 50S ribosomal subunit.

Its subcellular location is the plastid. The protein resides in the chloroplast. This Anthoceros angustus (Hornwort) protein is Large ribosomal subunit protein uL16c.